The following is a 477-amino-acid chain: Stromelysin-3 (477 aa).

The first 17 residues, 1-17, serve as a signal peptide directing secretion; the sequence is MHLLILLPALCVLGAHS. A propeptide spans 18–85 (activation peptide); sequence APLSYTYLQH…SSSGRNRQKR (68 aa). The segment at 64 to 83 is disordered; sequence RCGVPDIPAPPDSSSGRNRQ. Residues Cys65, His152, and Asp154 each coordinate Zn(2+). Ca(2+) contacts are provided by Asp159, Gly160, Gly162, and Ile164. Zn(2+) is bound by residues His167, His180, and His203. Glu204 is a catalytic residue. 2 residues coordinate Zn(2+): His207 and His213. An intrachain disulfide couples Cys279 to Cys466. Hemopexin repeat units lie at residues 280-324, 325-369, 370-418, and 419-466; these read KTNF…WRGI, PDTV…GISV, TQIQ…WRGV, and PKGI…FFNC.

Belongs to the peptidase M10A family. The cofactor is Ca(2+). Zn(2+) is required as a cofactor. In terms of tissue distribution, expressed in fibroblast cells that are activated by thyroid hormone. High levels in resorbing tail.

It localises to the secreted. The protein localises to the extracellular space. Its subcellular location is the extracellular matrix. In terms of biological role, may be involved in the modification of the extracellular matrix during metamorphic apoptosis. In Xenopus laevis (African clawed frog), this protein is Stromelysin-3 (mmp11).